An 84-amino-acid polypeptide reads, in one-letter code: Omega-theraphotoxin-Pm1a (84 aa).

The signal sequence occupies residues 1–21; sequence MKTSMLAVFVALPLAFVLTAA. A propeptide spanning residues 22–45 is cleaved from the precursor; sequence TEERAHPNELVNSLVELVKLDAER. 3 cysteine pairs are disulfide-bonded: C52–C66, C59–C71, and C65–C78.

The protein belongs to the neurotoxin 10 (Hwtx-1) family. 41 (Jztx-36) subfamily. In terms of tissue distribution, expressed by the venom gland.

It localises to the secreted. Its function is as follows. Omega-conotoxins act at presynaptic membranes, they bind and block voltage-gated calcium channels (Cav). This toxin inhibits barium currents (IBa) mediated by L-type voltage-gated calcium channels Cav1.2/CACNA1C (IC(50)=825 nM) and Cav1.3/CACNA1C (IC(50)=2240 nM). This chain is Omega-theraphotoxin-Pm1a, found in Pelinobius muticus (King baboon spider).